The following is a 382-amino-acid chain: Sphingosine kinase 1 (382 aa).

One can recognise a DAGKc domain in the interval 12–159 (PRPCRVLVLL…MNLLSLHTAS (148 aa)). ATP-binding positions include 22–24 (NPQ) and 54–58 (TERKN). 79 to 82 (SGDG) contributes to the substrate binding site. The active-site Proton donor/acceptor is the Asp81. ATP is bound by residues Glu86 and 111–113 (GSG). 2 consecutive short sequence motifs (nuclear export signal) follow at residues 147 to 155 (LSPMNLLSL) and 161 to 169 (LRLYSVLSL). Asp178 provides a ligand contact to substrate. ATP contacts are provided by Arg185 and Arg191. Thr193 carries the phosphothreonine modification. Ser225 carries the phosphoserine modification. 340–342 (DGE) lines the ATP pocket.

Interacts with ACY1. Binds to calmodulin. Interacts with SPHKAP. Interacts with CIB1, the interaction occurs in a calcium-dependent manner. Interacts with TRAF2. Interacts with EEF1A1; the interaction enhances SPHK1 kinase activity. The cofactor is Mg(2+). In terms of tissue distribution, widely expressed. Expressed in brain (at protein level). Detected in neurons.

It localises to the cytoplasm. Its subcellular location is the endosome membrane. The protein localises to the nucleus. It is found in the cell membrane. The protein resides in the synapse. The catalysed reaction is a sphingoid base + ATP = a sphingoid 1-phosphate + ADP + H(+). It carries out the reaction L-seryl-[protein] + acetyl-CoA = O-acetyl-L-seryl-[protein] + CoA. The enzyme catalyses sphinganine + ATP = sphinganine 1-phosphate + ADP + H(+). It catalyses the reaction sphing-4-enine + ATP = sphing-4-enine 1-phosphate + ADP + H(+). The catalysed reaction is 1-O-hexadecyl-2-amino-sn-glycerol + ATP = 1-O-hexadecyl-2-desoxy-2-amino-sn-glycero-3-phosphate + ADP + H(+). Its activity is regulated as follows. Acetyltransferase activity increases in presence of the kinase substrate, sphingosine. In Purkinje cells, kinase activity on sphingosine increases in presence of VEGFA. In neurons, kinase activity increases during the first 24h in presence of Amyloid-beta protein 42 to decrease after 96h. In terms of biological role, catalyzes the phosphorylation of sphingosine to form sphingosine 1-phosphate (SPP), a lipid mediator with both intra- and extracellular functions. Also acts on D-erythro-sphingosine and to a lesser extent sphinganine, but not other lipids, such as D,L-threo-dihydrosphingosine, N,N-dimethylsphingosine, diacylglycerol, ceramide, or phosphatidylinositol. In contrast to proapoptotic SPHK2, has a negative effect on intracellular ceramide levels, enhances cell growth and inhibits apoptosis. Involved in the regulation of inflammatory response and neuroinflammation. Via the product sphingosine 1-phosphate, stimulates TRAF2 E3 ubiquitin ligase activity, and promotes activation of NF-kappa-B in response to TNF signaling. In response to TNF and in parallel to NF-kappa-B activation, negatively regulates RANTES induction through p38 MAPK signaling pathway. Involved in endocytic membrane trafficking induced by sphingosine, recruited to dilate endosomes, also plays a role on later stages of endosomal maturation and membrane fusion independently of its kinase activity. In Purkinje cells, seems to be also involved in the regulation of autophagosome-lysosome fusion upon VEGFA. Functionally, has serine acetyltransferase activity on PTGS2/COX2 in an acetyl-CoA dependent manner. The acetyltransferase activity increases in presence of the kinase substrate, sphingosine. During neuroinflammation, through PTGS2 acetylation, promotes neuronal secretion of specialized preresolving mediators (SPMs), especially 15-R-lipoxin A4, which results in an increase of phagocytic microglia. This chain is Sphingosine kinase 1, found in Mus musculus (Mouse).